Consider the following 309-residue polypeptide: Porphobilinogen deaminase (309 aa).

Cys242 is subject to S-(dipyrrolylmethanemethyl)cysteine.

It belongs to the HMBS family. Monomer. It depends on dipyrromethane as a cofactor.

The catalysed reaction is 4 porphobilinogen + H2O = hydroxymethylbilane + 4 NH4(+). The protein operates within porphyrin-containing compound metabolism; protoporphyrin-IX biosynthesis; coproporphyrinogen-III from 5-aminolevulinate: step 2/4. In terms of biological role, tetrapolymerization of the monopyrrole PBG into the hydroxymethylbilane pre-uroporphyrinogen in several discrete steps. This chain is Porphobilinogen deaminase, found in Legionella pneumophila subsp. pneumophila (strain Philadelphia 1 / ATCC 33152 / DSM 7513).